A 57-amino-acid polypeptide reads, in one-letter code: MSKTVVRKNESLEDALRRFKRSVSKTGTLQEARKREFYEKPSVKRKKKSEAARKRKF.

It belongs to the bacterial ribosomal protein bS21 family.

This chain is Small ribosomal subunit protein bS21, found in Bacillus pumilus (strain SAFR-032).